The chain runs to 149 residues: Ribosomal RNA large subunit methyltransferase H (149 aa).

S-adenosyl-L-methionine-binding positions include Leu71, Gly98, and 117 to 122 (LSKLTL).

The protein belongs to the RNA methyltransferase RlmH family. As to quaternary structure, homodimer.

The protein localises to the cytoplasm. The enzyme catalyses pseudouridine(1915) in 23S rRNA + S-adenosyl-L-methionine = N(3)-methylpseudouridine(1915) in 23S rRNA + S-adenosyl-L-homocysteine + H(+). Its function is as follows. Specifically methylates the pseudouridine at position 1915 (m3Psi1915) in 23S rRNA. This is Ribosomal RNA large subunit methyltransferase H from Campylobacter jejuni subsp. doylei (strain ATCC BAA-1458 / RM4099 / 269.97).